We begin with the raw amino-acid sequence, 60 residues long: Large ribosomal subunit protein bL32 (60 aa).

Belongs to the bacterial ribosomal protein bL32 family.

This Petrotoga mobilis (strain DSM 10674 / SJ95) protein is Large ribosomal subunit protein bL32.